The sequence spans 241 residues: Lactate utilization protein C (241 aa).

The protein belongs to the LutC/YkgG family.

Functionally, is involved in L-lactate degradation and allows cells to grow with lactate as the sole carbon source. In Geobacillus sp. (strain WCH70), this protein is Lactate utilization protein C.